We begin with the raw amino-acid sequence, 514 residues long: MRWSIATAIASTAKGFLHLHHHFLKNSNPGIVLSPSLRFRFWVRAFSGTTIDYREVLRSGLHNIKFDDAFHLFVLMAYSYPLPSIVEFNKVLTAIAKMQMYDVVINLWKRIENAEGIEISPDLYTCNILVNCFCRCFQPSSALSYLGKMMKLGIEPDIVTASSLVNGFCLSNSIKDAVYVAGQMEKMGIKRDVVVDTILIDTLCKNRLVVPALEVLKRMKDRGISPNVVTYSSLITGLCKSGRLADAERRLHEMDSKKINPNVITFSALIDAYAKRGKLSKVDSVYKMMIQMSIDPNVFTYSSLIYGLCMHNRVDEAIKMLDLMISKGCTPNVVTYSTLANGFFKSSRVDDGIKLLDDMPQRGVAANTVSCNTLIKGYFQAGKIDLALGVFGYMTSNGLIPNIRSYNIVLAGLFANGEVEKALSRFEHMQKTRNDLDIITYTIMIHGMCKACMVKEAYDLFYKLKFKRVEPDFKAYTIMIAELNRAGMRTEADALNRFYQKHVRQNESAPAEVS.

11 PPR repeats span residues aspartate 122–proline 156, aspartate 157–arginine 191, aspartate 192–proline 226, asparagine 227–proline 261, asparagine 262–proline 296, asparagine 297–proline 331, asparagine 332–alanine 366, asparagine 367–proline 401, asparagine 402–leucine 436, aspartate 437–proline 471, and aspartate 472–proline 510.

This sequence belongs to the PPR family. P subfamily.

This is Pentatricopeptide repeat-containing protein At4g26800 from Arabidopsis thaliana (Mouse-ear cress).